The chain runs to 428 residues: Adenylosuccinate synthetase, chloroplastic (428 aa).

GTP contacts are provided by residues 17–23 and 45–47; these read GDEGKGK and GHT. Catalysis depends on aspartate 18, which acts as the Proton acceptor. Mg(2+) contacts are provided by aspartate 18 and glycine 45. IMP is bound by residues 18 to 21, 43 to 46, threonine 135, arginine 149, asparagine 226, threonine 241, and arginine 305; these read DEGK and NAGH. Histidine 46 serves as the catalytic Proton donor. 301-307 serves as a coordination point for substrate; the sequence is TTTGRPR. GTP is bound by residues arginine 307, 333 to 335, and 416 to 418; these read KLD and GVG.

Belongs to the adenylosuccinate synthetase family. In terms of assembly, homodimer. Mg(2+) is required as a cofactor.

It localises to the plastid. It is found in the chloroplast. The enzyme catalyses IMP + L-aspartate + GTP = N(6)-(1,2-dicarboxyethyl)-AMP + GDP + phosphate + 2 H(+). It participates in purine metabolism; AMP biosynthesis via de novo pathway; AMP from IMP: step 1/2. Functionally, plays an important role in the de novo pathway and in the salvage pathway of purine nucleotide biosynthesis. Catalyzes the first committed step in the biosynthesis of AMP from IMP. This chain is Adenylosuccinate synthetase, chloroplastic, found in Ostreococcus lucimarinus (strain CCE9901).